A 193-amino-acid polypeptide reads, in one-letter code: Ion-translocating oxidoreductase complex subunit A (193 aa).

The next 6 membrane-spanning stretches (helical) occupy residues 5 to 25, 39 to 59, 72 to 92, 102 to 122, 134 to 154, and 170 to 190; these read LLLL…FLGL, VGMG…AYLV, LSTL…EMVI, ILGI…LALL, VVYG…FASL, and IAIG…FTGL.

The protein belongs to the NqrDE/RnfAE family. The complex is composed of six subunits: RnfA, RnfB, RnfC, RnfD, RnfE and RnfG.

The protein resides in the cell inner membrane. Functionally, part of a membrane-bound complex that couples electron transfer with translocation of ions across the membrane. This Tolumonas auensis (strain DSM 9187 / NBRC 110442 / TA 4) protein is Ion-translocating oxidoreductase complex subunit A.